A 145-amino-acid chain; its full sequence is uncharacterized protein (145 aa).

The disordered stretch occupies residues tyrosine 95–threonine 119.

This is an uncharacterized protein from Treponema pallidum (strain Nichols).